A 475-amino-acid polypeptide reads, in one-letter code: Ribulose bisphosphate carboxylase large chain (475 aa).

A propeptide spanning residues 1–2 (MS) is cleaved from the precursor. The residue at position 3 (proline 3) is an N-acetylproline. Lysine 14 bears the N6,N6,N6-trimethyllysine mark. Positions 123 and 173 each coordinate substrate. Lysine 175 serves as the catalytic Proton acceptor. Lysine 177 lines the substrate pocket. The Mg(2+) site is built by lysine 201, aspartate 203, and glutamate 204. Lysine 201 carries the post-translational modification N6-carboxylysine. The Proton acceptor role is filled by histidine 294. Residues arginine 295, histidine 327, and serine 379 each coordinate substrate.

The protein belongs to the RuBisCO large chain family. Type I subfamily. In terms of assembly, heterohexadecamer of 8 large chains and 8 small chains; disulfide-linked. The disulfide link is formed within the large subunit homodimers. Mg(2+) is required as a cofactor. The disulfide bond which can form in the large chain dimeric partners within the hexadecamer appears to be associated with oxidative stress and protein turnover.

The protein localises to the plastid. It is found in the chloroplast. The enzyme catalyses 2 (2R)-3-phosphoglycerate + 2 H(+) = D-ribulose 1,5-bisphosphate + CO2 + H2O. The catalysed reaction is D-ribulose 1,5-bisphosphate + O2 = 2-phosphoglycolate + (2R)-3-phosphoglycerate + 2 H(+). Its function is as follows. RuBisCO catalyzes two reactions: the carboxylation of D-ribulose 1,5-bisphosphate, the primary event in carbon dioxide fixation, as well as the oxidative fragmentation of the pentose substrate in the photorespiration process. Both reactions occur simultaneously and in competition at the same active site. The polypeptide is Ribulose bisphosphate carboxylase large chain (Viscum album (European mistletoe)).